A 363-amino-acid chain; its full sequence is Transcription factor PIF6 (363 aa).

2 disordered regions span residues 154-204 (SEGS…RNDI) and 340-363 (IPNP…KTNR). Over residues 178 to 188 (RTRKALVKRKR) the composition is skewed to basic residues. Residues 188-237 (RNAEAYNSPERNQRNDINKKMRTLQNLLPNSHKDDNESMLDEAINYMTNL) form the bHLH domain. Over residues 340–350 (IPNPNSLSNLD) the composition is skewed to polar residues. Residues 354–363 (LHKKSRKTNR) show a composition bias toward basic residues.

In terms of assembly, homodimer. Interacts with APRR1/TOC1. Binds to RGL2 and RGA. Associates to PTAC12/HMR/PAP5 which acts as a transcriptional coactivator. Mainly expressed in fruits and flowers and, to a lower extent, in leaves, stems, seedlings and roots.

Its subcellular location is the nucleus. Functionally, transcription factor. In Arabidopsis thaliana (Mouse-ear cress), this protein is Transcription factor PIF6.